The chain runs to 290 residues: MDIEAYLERIGYKKSRNKLDLETLTDILQHQIRAVPFENLNIHCGDAMDLGLEAIFDQVVRRNRGGWCLQVNHLLYWALTTIGFETTMLGGYVYSTPAKKYSTGMIHLLLQVTIDGRNYIVDAGFGRSYQMWQPLELISGKDQPQVPCVFRLTEENGFWYLDQIRREQYIPNEEFLHSDLLEDSKYRKIYSFTLKPRTIEDFESMNTYLQTSPSSVFTSKSFCSLQTPDGVHCLVGFTLTHRRFNYKDNTDLIEFKTLSEEEIEKVLKNIFNISLQRKLVPKHGDRFFTI.

M1 is subject to N-acetylmethionine. C68 acts as the Acyl-thioester intermediate in catalysis. T103 and G104 together coordinate CoA. Residue 106 to 107 participates in substrate binding; the sequence is IH. Catalysis depends on residues H107 and D122. Residues Y208 and S214 each coordinate CoA.

This sequence belongs to the arylamine N-acetyltransferase family.

The protein resides in the cytoplasm. The catalysed reaction is an arylamine + acetyl-CoA = an N-acetylarylamine + CoA. Its function is as follows. Participates in the detoxification of a plethora of hydrazine and arylamine drugs. Catalyzes the N- or O-acetylation of various arylamine and heterocyclic amine substrates and is able to bioactivate several known carcinogens. The sequence is that of Arylamine N-acetyltransferase 1 (NAT1) from Homo sapiens (Human).